Here is a 150-residue protein sequence, read N- to C-terminus: MLGAALRRCAVAATTWAGPRGHLHSARTPGPAAAIQSVRCYSHGSQETDEEFDARWVTYFNKPDIDAWELRKGINTLVTYDMVPEPKIIDAALRACRRLNDFASTVRILEAVKDKAGPHKEIYPYVIQELRPTLNELGISTPEELGLDKV.

Residues 1–41 (MLGAALRRCAVAATTWAGPRGHLHSARTPGPAAAIQSVRCY) constitute a mitochondrion transit peptide. Residues 2 to 17 (LGAALRRCAVAATTWA) carry the SIFI-degron motif. N6-acetyllysine occurs at positions 87 and 113. T141 carries the phosphothreonine modification.

It belongs to the cytochrome c oxidase subunit 5A family. Component of the cytochrome c oxidase (complex IV, CIV), a multisubunit enzyme composed of 14 subunits. The complex is composed of a catalytic core of 3 subunits MT-CO1, MT-CO2 and MT-CO3, encoded in the mitochondrial DNA, and 11 supernumerary subunits COX4I, COX5A, COX5B, COX6A, COX6B, COX6C, COX7A, COX7B, COX7C, COX8 and NDUFA4, which are encoded in the nuclear genome. The complex exists as a monomer or a dimer and forms supercomplexes (SCs) in the inner mitochondrial membrane with NADH-ubiquinone oxidoreductase (complex I, CI) and ubiquinol-cytochrome c oxidoreductase (cytochrome b-c1 complex, complex III, CIII), resulting in different assemblies (supercomplex SCI(1)III(2)IV(1) and megacomplex MCI(2)III(2)IV(2)). Interacts with AFG1L. Interacts with RAB5IF. Post-translationally, in response to mitochondrial stress, the precursor protein is ubiquitinated by the SIFI complex in the cytoplasm before mitochondrial import, leading to its degradation. Within the SIFI complex, UBR4 initiates ubiquitin chain that are further elongated or branched by KCMF1.

The protein localises to the mitochondrion inner membrane. The protein operates within energy metabolism; oxidative phosphorylation. In terms of biological role, component of the cytochrome c oxidase, the last enzyme in the mitochondrial electron transport chain which drives oxidative phosphorylation. The respiratory chain contains 3 multisubunit complexes succinate dehydrogenase (complex II, CII), ubiquinol-cytochrome c oxidoreductase (cytochrome b-c1 complex, complex III, CIII) and cytochrome c oxidase (complex IV, CIV), that cooperate to transfer electrons derived from NADH and succinate to molecular oxygen, creating an electrochemical gradient over the inner membrane that drives transmembrane transport and the ATP synthase. Cytochrome c oxidase is the component of the respiratory chain that catalyzes the reduction of oxygen to water. Electrons originating from reduced cytochrome c in the intermembrane space (IMS) are transferred via the dinuclear copper A center (CU(A)) of subunit 2 and heme A of subunit 1 to the active site in subunit 1, a binuclear center (BNC) formed by heme A3 and copper B (CU(B)). The BNC reduces molecular oxygen to 2 water molecules using 4 electrons from cytochrome c in the IMS and 4 protons from the mitochondrial matrix. This Symphalangus syndactylus (Siamang) protein is Cytochrome c oxidase subunit 5A, mitochondrial (COX5A).